The following is a 339-amino-acid chain: Cathepsin B (339 aa).

A signal peptide spans Met1–Ala17. A propeptide spans Arg18–Lys79 (activation peptide). 6 disulfide bridges follow: Cys93–Cys122, Cys105–Cys150, Cys141–Cys207, Cys142–Cys146, Cys179–Cys211, and Cys187–Cys198. Residue Cys108 is part of the active site. An N-linked (GlcNAc...) asparagine glycan is attached at Asn192. Lys220 carries the post-translational modification N6-acetyllysine. Catalysis depends on residues His278 and Asn298. Residues Gln334–Ile339 constitute a propeptide that is removed on maturation.

This sequence belongs to the peptidase C1 family. In terms of assembly, dimer of a heavy chain and a light chain cross-linked by a disulfide bond. Interacts with SRPX2. Directly interacts with SHKBP1.

The protein localises to the lysosome. Its subcellular location is the melanosome. It is found in the secreted. It localises to the extracellular space. The protein resides in the apical cell membrane. It carries out the reaction Hydrolysis of proteins with broad specificity for peptide bonds. Preferentially cleaves -Arg-Arg-|-Xaa bonds in small molecule substrates (thus differing from cathepsin L). In addition to being an endopeptidase, shows peptidyl-dipeptidase activity, liberating C-terminal dipeptides.. Its function is as follows. Thiol protease which is believed to participate in intracellular degradation and turnover of proteins. Cleaves matrix extracellular phosphoglycoprotein MEPE. Involved in the solubilization of cross-linked TG/thyroglobulin in the thyroid follicle lumen. Has also been implicated in tumor invasion and metastasis. The sequence is that of Cathepsin B (CTSB) from Pongo abelii (Sumatran orangutan).